A 187-amino-acid chain; its full sequence is Large ribosomal subunit protein uL5 (187 aa).

Belongs to the universal ribosomal protein uL5 family. Part of the 50S ribosomal subunit; part of the 5S rRNA/L5/L18/L25 subcomplex. Contacts the 5S rRNA and the P site tRNA. Forms a bridge to the 30S subunit in the 70S ribosome.

Its function is as follows. This is one of the proteins that bind and probably mediate the attachment of the 5S RNA into the large ribosomal subunit, where it forms part of the central protuberance. In the 70S ribosome it contacts protein S13 of the 30S subunit (bridge B1b), connecting the 2 subunits; this bridge is implicated in subunit movement. Contacts the P site tRNA; the 5S rRNA and some of its associated proteins might help stabilize positioning of ribosome-bound tRNAs. The sequence is that of Large ribosomal subunit protein uL5 from Nocardia farcinica (strain IFM 10152).